The following is a 401-amino-acid chain: S-adenosylmethionine synthase 1 (401 aa).

An ATP-binding site is contributed by His-15. Asp-17 contacts Mg(2+). Glu-43 contacts K(+). L-methionine contacts are provided by Glu-56 and Gln-98. The segment at 98 to 108 (QSPDIAQGVDK) is flexible loop. Residues 173-175 (DGK), 246-247 (RF), Asp-255, 261-262 (RK), Ala-278, and Lys-282 each bind ATP. Asp-255 contributes to the L-methionine binding site. Lys-286 is an L-methionine binding site.

It belongs to the AdoMet synthase family. As to quaternary structure, homotetramer; dimer of dimers. Requires Mg(2+) as cofactor. It depends on K(+) as a cofactor.

It localises to the cytoplasm. The catalysed reaction is L-methionine + ATP + H2O = S-adenosyl-L-methionine + phosphate + diphosphate. The protein operates within amino-acid biosynthesis; S-adenosyl-L-methionine biosynthesis; S-adenosyl-L-methionine from L-methionine: step 1/1. Its function is as follows. Catalyzes the formation of S-adenosylmethionine (AdoMet) from methionine and ATP. The overall synthetic reaction is composed of two sequential steps, AdoMet formation and the subsequent tripolyphosphate hydrolysis which occurs prior to release of AdoMet from the enzyme. The polypeptide is S-adenosylmethionine synthase 1 (Frankia casuarinae (strain DSM 45818 / CECT 9043 / HFP020203 / CcI3)).